The primary structure comprises 411 residues: Peptidase T (411 aa).

His79 lines the Zn(2+) pocket. Asp81 is a catalytic residue. Asp142 contacts Zn(2+). Catalysis depends on Glu176, which acts as the Proton acceptor. Zn(2+) is bound by residues Glu177, Asp199, and His381.

The protein belongs to the peptidase M20B family. It depends on Zn(2+) as a cofactor.

It is found in the cytoplasm. The enzyme catalyses Release of the N-terminal residue from a tripeptide.. Functionally, cleaves the N-terminal amino acid of tripeptides. The sequence is that of Peptidase T from Geobacillus thermodenitrificans (strain NG80-2).